The primary structure comprises 202 residues: Probable WRKY transcription factor 59 (202 aa).

The WRKY DNA-binding region spans 103-168; sequence DEKVALDDGY…YEGRHNHPSP (66 aa).

Belongs to the WRKY group II-c family.

The protein resides in the nucleus. Transcription factor. Interacts specifically with the W box (5'-(T)TGAC[CT]-3'), a frequently occurring elicitor-responsive cis-acting element. This Arabidopsis thaliana (Mouse-ear cress) protein is Probable WRKY transcription factor 59 (WRKY59).